We begin with the raw amino-acid sequence, 400 residues long: Probable RNA polymerase sigma factor RfaY (400 aa).

A Polymerase core binding motif is present at residues 62–75 (WQRLAQLHQPASFL). The H-T-H motif DNA-binding region spans 165-184 (SDAAVRKRLSRARATVRNEL).

The protein belongs to the sigma-70 factor family. ECF subfamily.

Functionally, sigma factors are initiation factors that promote the attachment of RNA polymerase to specific initiation sites and are then released. This sigma factor is involved in lipopolysaccharide biosynthesis and pathogenicity. This chain is Probable RNA polymerase sigma factor RfaY (rfaY), found in Xanthomonas campestris pv. campestris (strain ATCC 33913 / DSM 3586 / NCPPB 528 / LMG 568 / P 25).